We begin with the raw amino-acid sequence, 380 residues long: Cytochrome b (380 aa).

The next 4 helical transmembrane spans lie at 34–54, 78–99, 114–134, and 179–199; these read FGSL…LLAM, WLIR…YLHI, WNTG…GYVL, and FFAL…IHLT. Heme b contacts are provided by His-84 and His-98. Positions 183 and 197 each coordinate heme b. His-202 serves as a coordination point for a ubiquinone. The next 4 membrane-spanning stretches (helical) occupy residues 227–247, 289–309, 321–341, and 348–368; these read LKDA…ALFS, LGGV…PLLH, LSQL…WVGS, and FIII…ILFP.

This sequence belongs to the cytochrome b family. The cytochrome bc1 complex contains 11 subunits: 3 respiratory subunits (MT-CYB, CYC1 and UQCRFS1), 2 core proteins (UQCRC1 and UQCRC2) and 6 low-molecular weight proteins (UQCRH/QCR6, UQCRB/QCR7, UQCRQ/QCR8, UQCR10/QCR9, UQCR11/QCR10 and a cleavage product of UQCRFS1). This cytochrome bc1 complex then forms a dimer. Requires heme b as cofactor.

It localises to the mitochondrion inner membrane. Its function is as follows. Component of the ubiquinol-cytochrome c reductase complex (complex III or cytochrome b-c1 complex) that is part of the mitochondrial respiratory chain. The b-c1 complex mediates electron transfer from ubiquinol to cytochrome c. Contributes to the generation of a proton gradient across the mitochondrial membrane that is then used for ATP synthesis. This chain is Cytochrome b (MT-CYB), found in Oceanites oceanicus (Wilson's storm petrel).